The chain runs to 374 residues: Tetraacyldisaccharide 4'-kinase (374 aa).

43–50 (TMGGTGKT) serves as a coordination point for ATP.

This sequence belongs to the LpxK family.

The enzyme catalyses a lipid A disaccharide + ATP = a lipid IVA + ADP + H(+). The protein operates within glycolipid biosynthesis; lipid IV(A) biosynthesis; lipid IV(A) from (3R)-3-hydroxytetradecanoyl-[acyl-carrier-protein] and UDP-N-acetyl-alpha-D-glucosamine: step 6/6. Transfers the gamma-phosphate of ATP to the 4'-position of a tetraacyldisaccharide 1-phosphate intermediate (termed DS-1-P) to form tetraacyldisaccharide 1,4'-bis-phosphate (lipid IVA). The sequence is that of Tetraacyldisaccharide 4'-kinase from Leptospira biflexa serovar Patoc (strain Patoc 1 / Ames).